Reading from the N-terminus, the 156-residue chain is ATP synthase subunit b (156 aa).

The helical transmembrane segment at 5 to 27 (ITLIGQMITFAIFVGFTMKFVWP) threads the bilayer.

The protein belongs to the ATPase B chain family. As to quaternary structure, F-type ATPases have 2 components, F(1) - the catalytic core - and F(0) - the membrane proton channel. F(1) has five subunits: alpha(3), beta(3), gamma(1), delta(1), epsilon(1). F(0) has three main subunits: a(1), b(2) and c(10-14). The alpha and beta chains form an alternating ring which encloses part of the gamma chain. F(1) is attached to F(0) by a central stalk formed by the gamma and epsilon chains, while a peripheral stalk is formed by the delta and b chains.

The protein resides in the cell inner membrane. Its function is as follows. F(1)F(0) ATP synthase produces ATP from ADP in the presence of a proton or sodium gradient. F-type ATPases consist of two structural domains, F(1) containing the extramembraneous catalytic core and F(0) containing the membrane proton channel, linked together by a central stalk and a peripheral stalk. During catalysis, ATP synthesis in the catalytic domain of F(1) is coupled via a rotary mechanism of the central stalk subunits to proton translocation. In terms of biological role, component of the F(0) channel, it forms part of the peripheral stalk, linking F(1) to F(0). The protein is ATP synthase subunit b of Francisella tularensis subsp. tularensis (strain SCHU S4 / Schu 4).